Here is a 507-residue protein sequence, read N- to C-terminus: Zinc finger protein Aiolos (507 aa).

The interval 1-85 (MEDIQPTVEL…PMGDAEESEM (85 aa)) is disordered. Residue Thr20 is modified to Phosphothreonine. Phosphoserine occurs at positions 22 and 42. Composition is skewed to basic and acidic residues over residues 33–46 (KPHE…REAP) and 56–72 (DSMK…ENIM). Residues Lys61, Lys73, and Lys100 each participate in a glycyl lysine isopeptide (Lys-Gly) (interchain with G-Cter in SUMO2) cross-link. 3 C2H2-type zinc fingers span residues 117–139 (MNCD…KRSH), 145–167 (FQCN…IKLH), and 173–195 (FKCH…LRTH). A C2H2-type 4; atypical zinc finger spans residues 201 to 223 (YKCEFCGRSYKQRSSLEEHKERC). A Glycyl lysine isopeptide (Lys-Gly) (interchain with G-Cter in SUMO2) cross-link involves residue Lys244. A Phosphothreonine modification is found at Thr325. A disordered region spans residues 370–396 (LPSERGLSPNNSAQDSTDTDSNHEDRQ). At Ser377 the chain carries Phosphoserine. Residues 450-472 (FRCDHCHVLFLDYVMFTIHMGCH) form a C2H2-type 5 zinc finger. Residues 450 to 502 (FRCDHCHVLFLDYVMFTIHMGCHGFRDPFECNMCGYRSHDRYEFSSHIARGEH) are mediates homodimerization and heterodimerization. The segment at 478 to 502 (FECNMCGYRSHDRYEFSSHIARGEH) adopts a C2H2-type 6; atypical zinc-finger fold.

This sequence belongs to the Ikaros C2H2-type zinc-finger protein family. In terms of assembly, homodimer. Heterodimer with other IKAROS family members. Interacts with IKZF4 and IKZF5. Interacts with HRAS. Interacts with FOXP3; this interaction may be required for silencing target genes and regulating the suppressive activity of FOXP3-positive regulatory T-cells (Treg). Interacts with BCL21L isoform Bcl-X(L); this interaction blocks the anti-apoptotic role of BCL21L. Associates with histone deacetylase complexes containing HDAC1, MTA2 and SIN3A. Interacts with IKZF1. As to expression, expression is restricted to lymphoid tissues. Expressed at highest levels in spleen and at lower levels in the thymus and bone marrow. First detected in more committed lymphoid progenitors and strongly up-regulated as these differentiate into pre-T and pre-B cell precursors.

The protein resides in the nucleus. It is found in the cytoplasm. Transcription factor that plays an important role in the regulation of lymphocyte differentiation. Binds to GGGAA. Plays an essential role in regulation of B-cell differentiation, proliferation and maturation to an effector state. Involved in regulating BCL2 expression and controlling apoptosis in T-cells in an IL2-dependent manner. The protein is Zinc finger protein Aiolos (Ikzf3) of Mus musculus (Mouse).